The following is a 303-amino-acid chain: Methionine import ATP-binding protein MetN (303 aa).

One can recognise an ABC transporter domain in the interval 1–222 (MLDQISLEIP…PDPKMRHFLG (222 aa)). 19-26 (GHSGAGKS) is a binding site for ATP.

It belongs to the ABC transporter superfamily. Methionine importer (TC 3.A.1.24) family. In terms of assembly, the complex is composed of two ATP-binding proteins (MetN), two transmembrane proteins (MetI) and a solute-binding protein (MetQ).

It localises to the cell inner membrane. The catalysed reaction is L-methionine(out) + ATP + H2O = L-methionine(in) + ADP + phosphate + H(+). The enzyme catalyses D-methionine(out) + ATP + H2O = D-methionine(in) + ADP + phosphate + H(+). Part of the ABC transporter complex MetNIQ involved in methionine import. Responsible for energy coupling to the transport system. In Wolinella succinogenes (strain ATCC 29543 / DSM 1740 / CCUG 13145 / JCM 31913 / LMG 7466 / NCTC 11488 / FDC 602W) (Vibrio succinogenes), this protein is Methionine import ATP-binding protein MetN.